A 355-amino-acid polypeptide reads, in one-letter code: MSGQPKRLMVMAGGTGGHVFPGLAVAHHLMAQGWQVRWLGTADRMEADLVPKHGIDIDFIRISGLRGKGVKALLAAPLRIFNAWRQARAIMKRFKPDVVLGMGGYVSGPGGLAAWSLGIPVVLHEQNGIAGLTNQWLAKIATTVMQAFPGAFPNAEVVGNPVRTDVLALPLPQERLAGRDGPIRVLVVGGSQGARVLNQTMPQVAARLGDTVTIWHQSGKGAQHTVEQAYAGVGQPQHKVTEFIDDMAAAYAWADVVVCRSGALTVSEIAAAGLPAIFVPFQHKDRQQYWNALPLENAGAAKIFEQPQFTVEAVADTLAGWSREALLTMAERARAVSIPDATERVASEVSRVART.

UDP-N-acetyl-alpha-D-glucosamine-binding positions include 15-17, Asn-127, Arg-163, Ser-191, Ile-244, 263-268, and Gln-288; these read TGG and ALTVSE.

This sequence belongs to the glycosyltransferase 28 family. MurG subfamily.

It is found in the cell inner membrane. It carries out the reaction di-trans,octa-cis-undecaprenyl diphospho-N-acetyl-alpha-D-muramoyl-L-alanyl-D-glutamyl-meso-2,6-diaminopimeloyl-D-alanyl-D-alanine + UDP-N-acetyl-alpha-D-glucosamine = di-trans,octa-cis-undecaprenyl diphospho-[N-acetyl-alpha-D-glucosaminyl-(1-&gt;4)]-N-acetyl-alpha-D-muramoyl-L-alanyl-D-glutamyl-meso-2,6-diaminopimeloyl-D-alanyl-D-alanine + UDP + H(+). It participates in cell wall biogenesis; peptidoglycan biosynthesis. Functionally, cell wall formation. Catalyzes the transfer of a GlcNAc subunit on undecaprenyl-pyrophosphoryl-MurNAc-pentapeptide (lipid intermediate I) to form undecaprenyl-pyrophosphoryl-MurNAc-(pentapeptide)GlcNAc (lipid intermediate II). This chain is UDP-N-acetylglucosamine--N-acetylmuramyl-(pentapeptide) pyrophosphoryl-undecaprenol N-acetylglucosamine transferase, found in Salmonella choleraesuis (strain SC-B67).